The primary structure comprises 139 residues: uncharacterized protein (139 aa).

The HTH cro/C1-type domain occupies 19-73 (IRLRRTMLGMSQEKLGESLGITFQQIQKYEKGTNRVGASRLQNISQILNVPVSFF). Positions 30 to 49 (QEKLGESLGITFQQIQKYEK) form a DNA-binding region, H-T-H motif.

This is an uncharacterized protein from Rhizobium meliloti (strain 1021) (Ensifer meliloti).